We begin with the raw amino-acid sequence, 472 residues long: Eukaryotic translation initiation factor 2 subunit 3 (472 aa).

Residue Ala-2 is modified to N-acetylalanine; partial. The residue at position 16 (Ser-16) is a Phosphoserine. The 210-residue stretch at 39–248 (QATINIGTIG…IVKKIPVPPR (210 aa)) folds into the tr-type G domain. Residues 48–55 (GHVAHGKS) form a G1 region. 51 to 56 (AHGKST) contacts GTP. The interval 76–80 (NITIK) is G2. Positions 134 to 137 (DCPG) are G3. Residues 190 to 193 (NKID) and 225 to 227 (SAQ) each bind GTP. Positions 190–193 (NKID) are G4. Residues 225-227 (SAQ) form a G5 region. The interacts with CDC123 stretch occupies residues 457–469 (GQIRRGVTIKPTV).

Belongs to the TRAFAC class translation factor GTPase superfamily. Classic translation factor GTPase family. EIF2G subfamily. As to quaternary structure, eukaryotic translation initiation factor 2 eIF2 is a heterotrimeric complex composed of an alpha (EIF2S1), a beta (EIF2S2) and a gamma (EIF2S3) chain. eIF2 is member of the 43S pre-initiation complex (43S PIC). Interacts (via C-terminus) with CDC123; the interaction is direct. In terms of tissue distribution, expressed in testis, brain, liver and muscle.

Its subcellular location is the cytoplasm. It localises to the cytosol. It catalyses the reaction GTP + H2O = GDP + phosphate + H(+). Its function is as follows. Member of the eIF2 complex that functions in the early steps of protein synthesis by forming a ternary complex with GTP and initiator tRNA. This complex binds to a 40S ribosomal subunit, followed by mRNA binding to form the 43S pre-initiation complex (43S PIC). Junction of the 60S ribosomal subunit to form the 80S initiation complex is preceded by hydrolysis of the GTP bound to eIF2 and release of an eIF2-GDP binary complex. In order for eIF2 to recycle and catalyze another round of initiation, the GDP bound to eIF2 must exchange with GTP by way of a reaction catalyzed by eIF-2B. The chain is Eukaryotic translation initiation factor 2 subunit 3 (EIF2S3) from Homo sapiens (Human).